The following is a 460-amino-acid chain: Argininosuccinate lyase (460 aa).

The protein belongs to the lyase 1 family. Argininosuccinate lyase subfamily.

Its subcellular location is the cytoplasm. It carries out the reaction 2-(N(omega)-L-arginino)succinate = fumarate + L-arginine. Its pathway is amino-acid biosynthesis; L-arginine biosynthesis; L-arginine from L-ornithine and carbamoyl phosphate: step 3/3. The chain is Argininosuccinate lyase from Nitratidesulfovibrio vulgaris (strain ATCC 29579 / DSM 644 / CCUG 34227 / NCIMB 8303 / VKM B-1760 / Hildenborough) (Desulfovibrio vulgaris).